Reading from the N-terminus, the 700-residue chain is Elongation factor G (700 aa).

Residues 8 to 290 form the tr-type G domain; sequence DRYRNVGIMA…AMIMYMPSPL (283 aa). GTP contacts are provided by residues 17–24, 88–92, and 142–145; these read AHIDAGKT, DTPGH, and NKMD.

It belongs to the TRAFAC class translation factor GTPase superfamily. Classic translation factor GTPase family. EF-G/EF-2 subfamily.

Its subcellular location is the cytoplasm. In terms of biological role, catalyzes the GTP-dependent ribosomal translocation step during translation elongation. During this step, the ribosome changes from the pre-translocational (PRE) to the post-translocational (POST) state as the newly formed A-site-bound peptidyl-tRNA and P-site-bound deacylated tRNA move to the P and E sites, respectively. Catalyzes the coordinated movement of the two tRNA molecules, the mRNA and conformational changes in the ribosome. This Vesicomyosocius okutanii subsp. Calyptogena okutanii (strain HA) protein is Elongation factor G.